A 159-amino-acid polypeptide reads, in one-letter code: Lipoprotein signal peptidase (159 aa).

The next 3 helical transmembrane spans lie at 4–24 (PYFVSITLFITIAVLILDQVT), 64–84 (MSFFFIVTIVVLGLLVFFYIK), and 88–108 (GNFLMQVAISLLFAGALGNFI). Active-site residues include aspartate 118 and aspartate 136. A helical membrane pass occupies residues 131-151 (IFNGADSSLTIGVILVLIALL).

Belongs to the peptidase A8 family.

The protein resides in the cell membrane. The catalysed reaction is Release of signal peptides from bacterial membrane prolipoproteins. Hydrolyzes -Xaa-Yaa-Zaa-|-(S,diacylglyceryl)Cys-, in which Xaa is hydrophobic (preferably Leu), and Yaa (Ala or Ser) and Zaa (Gly or Ala) have small, neutral side chains.. It participates in protein modification; lipoprotein biosynthesis (signal peptide cleavage). In terms of biological role, this protein specifically catalyzes the removal of signal peptides from prolipoproteins. In Staphylococcus carnosus (strain TM300), this protein is Lipoprotein signal peptidase.